Consider the following 158-residue polypeptide: Cyclic pyranopterin monophosphate synthase (158 aa).

Residues leucine 75 to histidine 77 and methionine 113 to glutamate 114 each bind substrate. Residue aspartate 128 is part of the active site.

This sequence belongs to the MoaC family. Homohexamer; trimer of dimers.

The catalysed reaction is (8S)-3',8-cyclo-7,8-dihydroguanosine 5'-triphosphate = cyclic pyranopterin phosphate + diphosphate. The protein operates within cofactor biosynthesis; molybdopterin biosynthesis. In terms of biological role, catalyzes the conversion of (8S)-3',8-cyclo-7,8-dihydroguanosine 5'-triphosphate to cyclic pyranopterin monophosphate (cPMP). In Mannheimia succiniciproducens (strain KCTC 0769BP / MBEL55E), this protein is Cyclic pyranopterin monophosphate synthase.